A 464-amino-acid polypeptide reads, in one-letter code: tRNA modification GTPase MnmE (464 aa).

3 residues coordinate (6S)-5-formyl-5,6,7,8-tetrahydrofolate: R27, E90, and K129. The TrmE-type G domain maps to 222 to 384 (GVTLVLAGSV…LYDRIRSFIA (163 aa)). Residues 232–237 (NVGKSS), 251–257 (SSYAGTT), and 276–279 (DTAG) contribute to the GTP site. S236 lines the Mg(2+) pocket. S251 is a K(+) binding site. Position 257 (T257) interacts with Mg(2+). K464 contacts (6S)-5-formyl-5,6,7,8-tetrahydrofolate.

Belongs to the TRAFAC class TrmE-Era-EngA-EngB-Septin-like GTPase superfamily. TrmE GTPase family. As to quaternary structure, homodimer. Heterotetramer of two MnmE and two MnmG subunits. Requires K(+) as cofactor.

The protein resides in the cytoplasm. Exhibits a very high intrinsic GTPase hydrolysis rate. Involved in the addition of a carboxymethylaminomethyl (cmnm) group at the wobble position (U34) of certain tRNAs, forming tRNA-cmnm(5)s(2)U34. The chain is tRNA modification GTPase MnmE from Borrelia recurrentis (strain A1).